The primary structure comprises 86 residues: Serine protease inhibitor Kazal-type 2 (86 aa).

The first 16 residues, Met1–Ser16, serve as a signal peptide directing secretion. One can recognise a Kazal-like domain in the interval Gln32–Cys86. 3 disulfide bridges follow: Cys38-Cys68, Cys46-Cys65, and Cys54-Cys86.

As to expression, expressed in sperm (at protein level). Expressed in testis but not in ovary, brain, heart, kidney or lung. Within testis, expressed in epididymis and germ cells.

The protein resides in the secreted. It is found in the cytoplasmic vesicle. The protein localises to the secretory vesicle. It localises to the acrosome. In terms of biological role, as a strong inhibitor of acrosin, it is required for normal spermiogenesis. It probably hinders premature activation of proacrosin and other proteases, thus preventing the cascade of events leading to spermiogenesis defects. May be involved in the regulation of serine protease-dependent germ cell apoptosis. It also inhibits trypsin. The polypeptide is Serine protease inhibitor Kazal-type 2 (Spink2) (Mus musculus (Mouse)).